Reading from the N-terminus, the 289-residue chain is Formamidopyrimidine-DNA glycosylase (289 aa).

P2 serves as the catalytic Schiff-base intermediate with DNA. Residue E3 is the Proton donor of the active site. K61 acts as the Proton donor; for beta-elimination activity in catalysis. Residues H96, R115, and K161 each contribute to the DNA site. The segment at 247–281 adopts an FPG-type zinc-finger fold; it reads SAYGQENLPCPRCGAPIKREKFMNRSSFSCPRCQP. The Proton donor; for delta-elimination activity role is filled by R271.

Belongs to the FPG family. As to quaternary structure, monomer. Requires Zn(2+) as cofactor.

The enzyme catalyses Hydrolysis of DNA containing ring-opened 7-methylguanine residues, releasing 2,6-diamino-4-hydroxy-5-(N-methyl)formamidopyrimidine.. The catalysed reaction is 2'-deoxyribonucleotide-(2'-deoxyribose 5'-phosphate)-2'-deoxyribonucleotide-DNA = a 3'-end 2'-deoxyribonucleotide-(2,3-dehydro-2,3-deoxyribose 5'-phosphate)-DNA + a 5'-end 5'-phospho-2'-deoxyribonucleoside-DNA + H(+). In terms of biological role, involved in base excision repair of DNA damaged by oxidation or by mutagenic agents. Acts as a DNA glycosylase that recognizes and removes damaged bases. Has a preference for oxidized purines, such as 7,8-dihydro-8-oxoguanine (8-oxoG). Has AP (apurinic/apyrimidinic) lyase activity and introduces nicks in the DNA strand. Cleaves the DNA backbone by beta-delta elimination to generate a single-strand break at the site of the removed base with both 3'- and 5'-phosphates. The chain is Formamidopyrimidine-DNA glycosylase from Rhodococcus erythropolis (strain PR4 / NBRC 100887).